Here is a 132-residue protein sequence, read N- to C-terminus: Agouti-signaling protein (132 aa).

The signal sequence occupies residues 1–22; sequence MDVTRLLLATLLVFLCFFTVYS. N-linked (GlcNAc...) asparagine glycosylation is present at N39. The disordered stretch occupies residues 62–88; it reads ISRKEAEKKRSSKKEASMKKVAQPRTP. Residues 63–79 show a composition bias toward basic and acidic residues; the sequence is SRKEAEKKRSSKKEASM. 5 disulfide bridges follow: C93–C108, C100–C114, C107–C125, C111–C132, and C116–C123. The Agouti domain occupies 93–132; the sequence is CVATRYSCKPPAPACCDPCASCQCRFFRSACSCRVLRLNC.

The protein resides in the secreted. Involved in the regulation of melanogenesis. The binding of ASP to MC1R precludes alpha-MSH initiated signaling and thus blocks production of cAMP, leading to a down-regulation of eumelanogenesis (brown/black pigment) and thus increasing synthesis of pheomelanin (yellow/red pigment). The chain is Agouti-signaling protein (ASIP) from Semnopithecus entellus (Northern plains gray langur).